A 219-amino-acid polypeptide reads, in one-letter code: Large ribosomal subunit protein uL16y (219 aa).

It belongs to the universal ribosomal protein uL16 family. Component of the small ribosomal subunit. Mature ribosomes consist of a small (40S) and a large (60S) subunit. The 40S subunit contains about 33 different proteins and 1 molecule of RNA (18S). The 60S subunit contains about 49 different proteins and 3 molecules of RNA (25S, 5.8S and 5S).

The protein is Large ribosomal subunit protein uL16y (SG12) of Oryza sativa subsp. japonica (Rice).